We begin with the raw amino-acid sequence, 435 residues long: Eukaryotic translation initiation factor 3 subunit E (435 aa).

Residues 219–392 (FFNHPKGRDL…GHVVMGTQPL (174 aa)) enclose the PCI domain.

Belongs to the eIF-3 subunit E family. Component of the eukaryotic translation initiation factor 3 (eIF-3) complex. The eIF-3 complex interacts with pix. Interacts with mxt.

The protein localises to the cytoplasm. In terms of biological role, component of the eukaryotic translation initiation factor 3 (eIF-3) complex, which is involved in protein synthesis of a specialized repertoire of mRNAs and, together with other initiation factors, stimulates binding of mRNA and methionyl-tRNAi to the 40S ribosome. The eIF-3 complex specifically targets and initiates translation of a subset of mRNAs involved in cell proliferation. The sequence is that of Eukaryotic translation initiation factor 3 subunit E (eIF3-S6) from Drosophila erecta (Fruit fly).